The following is a 287-amino-acid chain: mRNA-capping enzyme regulatory subunit OPG124 (287 aa).

It belongs to the orthopoxvirus mRNA-capping enzyme regulatory subunit family. Interacts with the catalytic subunit OPG113.

It localises to the virion. Its function is as follows. Regulatory subunit of the mRNA cap enzyme which stabilizes the catalytic subunit and enhances its methyltransferase activity through an allosteric mechanism. Heterodimeric mRNA capping enzyme catalyzes the linkage of a N7-methyl-guanosine moiety to the first transcribed nucleotide (cap 0 structure), whereas the methyltransferase OPG102 is responsible for a second methylation at the 2'-O position of the ribose (cap 1 structure). Also involved in early viral gene transcription termination and intermediate viral gene transcription initiation. Early gene transcription termination requires the termination factor VTF, the DNA-dependent ATPase NPH-I/OPG123 and the RAP94/OPG109 subunit of the viral RNA polymerase, as well as the presence of a specific termination motif. Binds, together with RAP94/OPG109, to the termination motif 5'-UUUUUNU-3' in the nascent early mRNA. This chain is mRNA-capping enzyme regulatory subunit OPG124 (OPG124), found in Vaccinia virus (strain Copenhagen) (VACV).